The following is a 146-amino-acid chain: Protein archease (146 aa).

Residues Asp-16, Asp-145, and Ile-146 each contribute to the Ca(2+) site.

Belongs to the archease family.

In terms of biological role, activates the tRNA-splicing ligase complex by facilitating the enzymatic turnover of catalytic subunit RtcB. Acts by promoting the guanylylation of RtcB, a key intermediate step in tRNA ligation. Can also alter the NTP specificity of RtcB such that ATP, dGTP or ITP is used efficiently. In Methanosarcina acetivorans (strain ATCC 35395 / DSM 2834 / JCM 12185 / C2A), this protein is Protein archease.